The following is a 417-amino-acid chain: Pigment epithelium-derived factor (417 aa).

The first 19 residues, 1-19, serve as a signal peptide directing secretion; the sequence is MQALVLLLWTGALLGHGSS. Positions 17-41 are disordered; that stretch reads GSSQNVPSSSEGSPVPDSTGEPVEE. A compositionally biased stretch (polar residues) spans 18 to 28; the sequence is SSQNVPSSSEG. At glutamine 20 the chain carries Pyrrolidone carboxylic acid. Phosphoserine is present on serine 24. The N-linked (GlcNAc...) asparagine glycan is linked to asparagine 284.

Belongs to the serpin family. As to quaternary structure, interacts with PNPLA2; this interaction stimulates the phospholipase A2 activity of PNPLA2. In terms of tissue distribution, highly expressed in the liver, gastric glandular mucosa and renal tubules. It is also expressed in the brain, heart, lung retina and testes.

The protein localises to the secreted. Its subcellular location is the melanosome. Functionally, neurotrophic protein; induces extensive neuronal differentiation in retinoblastoma cells. Potent inhibitor of angiogenesis. As it does not undergo the S (stressed) to R (relaxed) conformational transition characteristic of active serpins, it exhibits no serine protease inhibitory activity. The polypeptide is Pigment epithelium-derived factor (Serpinf1) (Mus musculus (Mouse)).